The primary structure comprises 413 residues: Phosphopentomutase (413 aa).

Residues aspartate 11, aspartate 306, histidine 311, aspartate 347, histidine 348, and histidine 359 each coordinate Mn(2+).

This sequence belongs to the phosphopentomutase family. It depends on Mn(2+) as a cofactor.

It is found in the cytoplasm. The catalysed reaction is 2-deoxy-alpha-D-ribose 1-phosphate = 2-deoxy-D-ribose 5-phosphate. The enzyme catalyses alpha-D-ribose 1-phosphate = D-ribose 5-phosphate. It functions in the pathway carbohydrate degradation; 2-deoxy-D-ribose 1-phosphate degradation; D-glyceraldehyde 3-phosphate and acetaldehyde from 2-deoxy-alpha-D-ribose 1-phosphate: step 1/2. Isomerase that catalyzes the conversion of deoxy-ribose 1-phosphate (dRib-1-P) and ribose 1-phosphate (Rib-1-P) to deoxy-ribose 5-phosphate (dRib-5-P) and ribose 5-phosphate (Rib-5-P), respectively. This Helicobacter pylori (strain J99 / ATCC 700824) (Campylobacter pylori J99) protein is Phosphopentomutase.